The chain runs to 116 residues: Immunoglobulin heavy variable 2-4 (116 aa).

The signal sequence occupies residues 1–19 (MAVLVLLFCLVTFPSCVLS). An Ig-like domain is found at 20–116 (QVQLKQSGPG…DDTAIYYCAK (97 aa)). C41 and C114 are oxidised to a cystine.

This is Immunoglobulin heavy variable 2-4 from Mus musculus (Mouse).